Reading from the N-terminus, the 262-residue chain is Indole-3-glycerol phosphate synthase (262 aa).

This sequence belongs to the TrpC family.

The catalysed reaction is 1-(2-carboxyphenylamino)-1-deoxy-D-ribulose 5-phosphate + H(+) = (1S,2R)-1-C-(indol-3-yl)glycerol 3-phosphate + CO2 + H2O. It functions in the pathway amino-acid biosynthesis; L-tryptophan biosynthesis; L-tryptophan from chorismate: step 4/5. The polypeptide is Indole-3-glycerol phosphate synthase (Clostridium kluyveri (strain NBRC 12016)).